The sequence spans 308 residues: Hydroxyacylglutathione hydrolase, mitochondrial (308 aa).

The N-terminal 13 residues, methionine 1 to leucine 13, are a transit peptide targeting the mitochondrion. The Zn(2+) site is built by histidine 102, histidine 104, aspartate 106, and histidine 107. Lysine 116 carries the N6-acetyllysine modification. 2 residues coordinate Zn(2+): histidine 158 and aspartate 182. Substrate-binding positions include lysine 191–tyrosine 193 and histidine 221–tyrosine 223. Histidine 221 contacts Zn(2+). Lysine 229 bears the N6-acetyllysine; alternate mark. N6-succinyllysine; alternate is present on lysine 229. A substrate-binding site is contributed by arginine 297–lysine 300.

The protein belongs to the metallo-beta-lactamase superfamily. Glyoxalase II family. Monomer. It depends on Zn(2+) as a cofactor. As to expression, testis.

Its subcellular location is the mitochondrion matrix. It localises to the cytoplasm. The catalysed reaction is an S-(2-hydroxyacyl)glutathione + H2O = a 2-hydroxy carboxylate + glutathione + H(+). It catalyses the reaction (R)-S-lactoylglutathione + H2O = (R)-lactate + glutathione + H(+). It participates in secondary metabolite metabolism; methylglyoxal degradation; (R)-lactate from methylglyoxal: step 2/2. Thiolesterase that catalyzes the hydrolysis of S-D-lactoyl-glutathione to form glutathione and D-lactic acid. This Macaca fascicularis (Crab-eating macaque) protein is Hydroxyacylglutathione hydrolase, mitochondrial (HAGH).